A 181-amino-acid polypeptide reads, in one-letter code: 3-hexulose-6-phosphate isomerase (181 aa).

In terms of domain architecture, SIS spans 27-168 (ILSLVDAAGR…IAKLVDQKGL (142 aa)). Substrate-binding positions include S45 and 84–89 (SGSGST). The Proton acceptor role is filled by E148.

The protein belongs to the SIS family. PHI subfamily. As to quaternary structure, homodimer.

It catalyses the reaction D-arabino-hex-3-ulose 6-phosphate = beta-D-fructose 6-phosphate. It functions in the pathway one-carbon metabolism; formaldehyde assimilation via RuMP pathway; D-fructose 6-phosphate from D-ribulose 5-phosphate and formaldehyde: step 2/2. Functionally, catalyzes the isomerization between 3-hexulose 6-phosphate and fructose 6-phosphate. The chain is 3-hexulose-6-phosphate isomerase (rmpB) from Methylomonas aminofaciens.